The sequence spans 379 residues: Putative glutamate--cysteine ligase 2 (379 aa).

It belongs to the glutamate--cysteine ligase type 2 family. YbdK subfamily.

The enzyme catalyses L-cysteine + L-glutamate + ATP = gamma-L-glutamyl-L-cysteine + ADP + phosphate + H(+). Functionally, ATP-dependent carboxylate-amine ligase which exhibits weak glutamate--cysteine ligase activity. In Mycobacterium avium (strain 104), this protein is Putative glutamate--cysteine ligase 2.